We begin with the raw amino-acid sequence, 249 residues long: 5'-nucleotidase SurE (249 aa).

Residues aspartate 8, aspartate 9, serine 39, and asparagine 91 each coordinate a divalent metal cation.

The protein belongs to the SurE nucleotidase family. The cofactor is a divalent metal cation.

The protein localises to the cytoplasm. It carries out the reaction a ribonucleoside 5'-phosphate + H2O = a ribonucleoside + phosphate. Its function is as follows. Nucleotidase that shows phosphatase activity on nucleoside 5'-monophosphates. In Pseudomonas aeruginosa (strain LESB58), this protein is 5'-nucleotidase SurE.